The following is a 193-amino-acid chain: Holliday junction branch migration complex subunit RuvA (193 aa).

A domain I region spans residues 1-64 (MIGRIAGTLL…EDAHLLFGFA (64 aa)). The interval 65–144 (TATERNTFRE…DLGHAPGATP (80 aa)) is domain II. Residues 145–151 (LADSAVD) form a flexible linker region. A domain III region spans residues 151-193 (DILNALLALGYSEKEAAQAIKQVPAGTGVSDGIKLALKALSKG).

Belongs to the RuvA family. In terms of assembly, homotetramer. Forms an RuvA(8)-RuvB(12)-Holliday junction (HJ) complex. HJ DNA is sandwiched between 2 RuvA tetramers; dsDNA enters through RuvA and exits via RuvB. An RuvB hexamer assembles on each DNA strand where it exits the tetramer. Each RuvB hexamer is contacted by two RuvA subunits (via domain III) on 2 adjacent RuvB subunits; this complex drives branch migration. In the full resolvosome a probable DNA-RuvA(4)-RuvB(12)-RuvC(2) complex forms which resolves the HJ.

It localises to the cytoplasm. Functionally, the RuvA-RuvB-RuvC complex processes Holliday junction (HJ) DNA during genetic recombination and DNA repair, while the RuvA-RuvB complex plays an important role in the rescue of blocked DNA replication forks via replication fork reversal (RFR). RuvA specifically binds to HJ cruciform DNA, conferring on it an open structure. The RuvB hexamer acts as an ATP-dependent pump, pulling dsDNA into and through the RuvAB complex. HJ branch migration allows RuvC to scan DNA until it finds its consensus sequence, where it cleaves and resolves the cruciform DNA. This is Holliday junction branch migration complex subunit RuvA from Cupriavidus metallidurans (strain ATCC 43123 / DSM 2839 / NBRC 102507 / CH34) (Ralstonia metallidurans).